The chain runs to 365 residues: Tubulin-like protein CetZ (365 aa).

GTP contacts are provided by residues 10-14 (QCGGK), 103-105 (GTG), glutamate 136, asparagine 163, and asparagine 181.

This sequence belongs to the CetZ family.

Its subcellular location is the cytoplasm. Involved in cell shape control. The protein is Tubulin-like protein CetZ of Pyrococcus abyssi (strain GE5 / Orsay).